Reading from the N-terminus, the 161-residue chain is Arachidonate 5-lipoxygenase-activating protein (161 aa).

The Lumenal portion of the chain corresponds to 1–8 (MDQETVGN). Residues 9–30 (VVLLAIVTLISVVQNGFFAHKV) traverse the membrane as a helical segment. The Cytoplasmic portion of the chain corresponds to 31–52 (EHESRTQNGRSFQRTGTLAFER). A helical transmembrane segment spans residues 53–77 (VYTANQNCVDAYPTFLAVLWSAGLL). Residues 78-80 (CSQ) are Lumenal-facing. A helical transmembrane segment spans residues 81 to 102 (VPAAFAGLMYLLVRQKYFVGYL). Residues 103-107 (GERTQ) lie on the Cytoplasmic side of the membrane. The stretch at 108–115 (STPGYIFG) is an intramembrane region. Residues 116–128 (KRIILFLFLMSVA) form a helical membrane-spanning segment. The Lumenal segment spans residues 129-161 (GIFNYYLIFFFGSDFENYIKTVTTTISPLLLIP).

It belongs to the MAPEG family. Homotrimer. Interacts with LTC4S and ALOX5.

The protein localises to the nucleus membrane. It localises to the endoplasmic reticulum membrane. Functionally, required for leukotriene biosynthesis by ALOX5 (5-lipoxygenase). Anchors ALOX5 to the membrane. Binds arachidonic acid, and could play an essential role in the transfer of arachidonic acid to ALOX5. Binds to MK-886, a compound that blocks the biosynthesis of leukotrienes. In Macaca fascicularis (Crab-eating macaque), this protein is Arachidonate 5-lipoxygenase-activating protein (ALOX5AP).